The sequence spans 209 residues: MQYINATEIMDDIDEPRLFEEDGVEALVVALVAPLLKPLGYRLVRVKLLGLNGLTLQIMAERADGTMTIEDCEIISKTISPLLDVQNVIERKYHLEISSPGIDRPLVRKSDFFHWQGYTAKIETRTIVNGRRKFRGALENVTQDGFILNIDAAPEEETVYVSFSNITNAHLVLTDKLIRDALKKDKNLRQQLIPEDDFNISESEINFSN.

It belongs to the RimP family.

It localises to the cytoplasm. Its function is as follows. Required for maturation of 30S ribosomal subunits. In Bartonella bacilliformis (strain ATCC 35685 / KC583 / Herrer 020/F12,63), this protein is Ribosome maturation factor RimP.